A 255-amino-acid chain; its full sequence is Placenta-expressed transcript 1 protein (255 aa).

Residues 1-26 form the signal peptide; that stretch reads MPALRTLLPHLGLFLCLALCFSPSFS. Asn57, Asn67, and Asn126 each carry an N-linked (GlcNAc...) asparagine glycan. Residue Ser236 is the site of GPI-anchor amidated serine attachment. The propeptide at 237–255 is removed in mature form; the sequence is PLAGALHILLVFLISKLLF.

In terms of processing, N-glycosylated. Post-translationally, GPI-anchored.

It is found in the apical cell membrane. Modulates leading keratinocyte migration and cellular adhesion to matrix proteins during a wound-healing response and promotes wound repair. May play a role during trichilemmal differentiation of the hair follicle. This Rattus norvegicus (Rat) protein is Placenta-expressed transcript 1 protein (Plet1).